The following is a 247-amino-acid chain: Small ribosomal subunit protein uS2 (247 aa).

It belongs to the universal ribosomal protein uS2 family.

In Fusobacterium nucleatum subsp. nucleatum (strain ATCC 25586 / DSM 15643 / BCRC 10681 / CIP 101130 / JCM 8532 / KCTC 2640 / LMG 13131 / VPI 4355), this protein is Small ribosomal subunit protein uS2.